The chain runs to 547 residues: Apicoplast pyruvate carrier 1 (547 aa).

A disordered region spans residues 1–33 (MEPRAPPRLSVSSPRRESGATVPSHSPSTLLSC). Over 1 to 45 (MEPRAPPRLSVSSPRRESGATVPSHSPSTLLSCASSETATEKRRR) the chain is Cytoplasmic. Positions 21–33 (TVPSHSPSTLLSC) are enriched in polar residues. 12 helical membrane passes run 46–66 (WTGV…GTVY), 126–146 (AWVL…GGIA), 167–187 (VGMA…FGVI), 189–209 (GVGL…WFPE), 212–232 (GIVS…FSPL), 278–298 (LLAV…RVPA), 345–365 (ALVS…GLAI), 385–405 (ILTE…NAVG), 417–437 (GFQT…FFLP), 445–465 (LCYA…FSVF), 467–487 (SAVA…FIFG), and 515–535 (LMGL…ALSP).

It belongs to the major facilitator superfamily. In terms of assembly, interacts with apicoplast pyruvate carrier 2.

The protein resides in the plastid. Its subcellular location is the apicoplast. It is found in the membrane. Its function is as follows. Along with apicoplast pyruvate carrier 2, forms apicoplast pyruvate carrier (APC) complex, which transports pyruvate into the apicoplast and may also transport amino acids like methionine, serine, glycine and tryptophan with low efficiency. Required for maintaining pyruvate-dependent metabolic activities in the apicoplast, such as synthesis of fatty acids, isopentenyl pyrophosphate (IPP), dimethylallyl pyrophosphate (DMAPP) and methylerythritol 4-phosphate (MEP). Required for maintaining the integrity of the apicoplast. Required for normal parasite growth. This is Apicoplast pyruvate carrier 1 from Toxoplasma gondii.